The sequence spans 101 residues: Protein snet-1 (101 aa).

Positions 1–20 (MARFTPLLMILLALVPLYYS) are cleaved as a signal peptide.

In terms of processing, may be degraded by the nep-2 peptidase. Expressed in coelomocytes, the ASK sensory neurons and interneurons AIB, AIM and PVQ.

The protein localises to the secreted. It is found in the perikaryon. Negatively regulates chemotaxis and olfactory plasticity which is the change from positive chemotaxis to dispersal after prolonged exposure to an odorant. May be down-regulated in response to pheromone exposure, resulting in promotion of olfactory plasticity. The sequence is that of Protein snet-1 from Caenorhabditis elegans.